The chain runs to 843 residues: Protein P (843 aa).

Residues 1–177 (MPLSYQHFRK…FCGSPYSWEQ (177 aa)) form a terminal protein domain (TP) region. The segment at 178 to 346 (ELQHGRLVFQ…YCLTHIVNLL (169 aa)) is spacer. 2 disordered regions span residues 224–273 (GLQP…SSTS) and 288–316 (HLST…RSQS). Over residues 288–299 (HLSTSKRQSSSG) the composition is skewed to polar residues. The segment at 347–690 (EDWGPCTEHG…YLNLYPVARQ (344 aa)) is polymerase/reverse transcriptase domain (RT). Residues 357-600 (EHNIRIPRTP…YSLNFMGYVI (244 aa)) enclose the Reverse transcriptase domain. Mg(2+)-binding residues include Asp-429, Asp-551, and Asp-552.

It belongs to the hepadnaviridae P protein family.

The catalysed reaction is DNA(n) + a 2'-deoxyribonucleoside 5'-triphosphate = DNA(n+1) + diphosphate. It catalyses the reaction Endonucleolytic cleavage to 5'-phosphomonoester.. Its activity is regulated as follows. Activated by host HSP70 and HSP40 in vitro to be able to bind the epsilon loop of the pgRNA. Because deletion of the RNase H region renders the protein partly chaperone-independent, the chaperones may be needed indirectly to relieve occlusion of the RNA-binding site by this domain. Inhibited by several reverse-transcriptase inhibitors: Lamivudine, Adefovir and Entecavir. Multifunctional enzyme that converts the viral RNA genome into dsDNA in viral cytoplasmic capsids. This enzyme displays a DNA polymerase activity that can copy either DNA or RNA templates, and a ribonuclease H (RNase H) activity that cleaves the RNA strand of RNA-DNA heteroduplexes in a partially processive 3'- to 5'-endonucleasic mode. Neo-synthesized pregenomic RNA (pgRNA) are encapsidated together with the P protein, and reverse-transcribed inside the nucleocapsid. Initiation of reverse-transcription occurs first by binding the epsilon loop on the pgRNA genome, and is initiated by protein priming, thereby the 5'-end of (-)DNA is covalently linked to P protein. Partial (+)DNA is synthesized from the (-)DNA template and generates the relaxed circular DNA (RC-DNA) genome. After budding and infection, the RC-DNA migrates in the nucleus, and is converted into a plasmid-like covalently closed circular DNA (cccDNA). The activity of P protein does not seem to be necessary for cccDNA generation, and is presumably released from (+)DNA by host nuclear DNA repair machinery. In Homo sapiens (Human), this protein is Protein P.